Consider the following 504-residue polypeptide: ATP synthase subunit alpha (504 aa).

170 to 177 serves as a coordination point for ATP; it reads GDRQTGKT.

It belongs to the ATPase alpha/beta chains family. In terms of assembly, F-type ATPases have 2 components, CF(1) - the catalytic core - and CF(0) - the membrane proton channel. CF(1) has five subunits: alpha(3), beta(3), gamma(1), delta(1), epsilon(1). CF(0) has three main subunits: a(1), b(2) and c(9-12). The alpha and beta chains form an alternating ring which encloses part of the gamma chain. CF(1) is attached to CF(0) by a central stalk formed by the gamma and epsilon chains, while a peripheral stalk is formed by the delta and b chains.

Its subcellular location is the cell membrane. It carries out the reaction ATP + H2O + 4 H(+)(in) = ADP + phosphate + 5 H(+)(out). Functionally, produces ATP from ADP in the presence of a proton gradient across the membrane. The alpha chain is a regulatory subunit. The sequence is that of ATP synthase subunit alpha from Shouchella clausii (strain KSM-K16) (Alkalihalobacillus clausii).